The following is a 698-amino-acid chain: Elongation factor G 1 (698 aa).

Residues 8-290 (ERYRNIGICA…AVVEFLPAPV (283 aa)) form the tr-type G domain. GTP contacts are provided by residues 17 to 24 (AHVDAGKT), 88 to 92 (DTPGH), and 142 to 145 (NKMD).

The protein belongs to the TRAFAC class translation factor GTPase superfamily. Classic translation factor GTPase family. EF-G/EF-2 subfamily.

Its subcellular location is the cytoplasm. Catalyzes the GTP-dependent ribosomal translocation step during translation elongation. During this step, the ribosome changes from the pre-translocational (PRE) to the post-translocational (POST) state as the newly formed A-site-bound peptidyl-tRNA and P-site-bound deacylated tRNA move to the P and E sites, respectively. Catalyzes the coordinated movement of the two tRNA molecules, the mRNA and conformational changes in the ribosome. This is Elongation factor G 1 from Shewanella sp. (strain MR-4).